The chain runs to 1250 residues: Ras-associated and pleckstrin homology domains-containing protein 1 (1250 aa).

N-acetylmethionine is present on Met1. Over residues 1-23 (MEQLSDEEIDHGAEEDSDKEDQD) the composition is skewed to acidic residues. The segment at 1-26 (MEQLSDEEIDHGAEEDSDKEDQDLDK) is disordered. 7 positions are modified to phosphoserine: Ser5, Ser17, Ser54, Ser150, Ser192, Ser203, and Ser205. Positions 179 to 217 (TKPLVTNQHRRTASAGTVSDAEVHSISNSSHSSITSAAS) are disordered. The span at 202–217 (HSISNSSHSSITSAAS) shows a compositional bias: low complexity. One can recognise a Ras-associating domain in the interval 269–355 (KKLVIRVHMS…NKLIFMERIE (87 aa)). Positions 396 to 505 (VPEIEGVLWL…WVNGIRIAKY (110 aa)) constitute a PH domain. A phosphotyrosine; by ABL1 mark is found at Tyr426 and Tyr456. The span at 535-551 (KSGSSSSSIPESQSNHS) shows a compositional bias: low complexity. 5 disordered regions span residues 535–570 (KSGS…VRSQ), 588–663 (EESS…AAPM), 675–1036 (NASQ…SGVN), 1050–1162 (APVL…LSVQ), and 1176–1250 (KSIT…SRDW). The segment covering 552 to 570 (NQSDSGVSDTQPAGHVRSQ) has biased composition (polar residues). Residues 588-597 (EESSKARMES) are compositionally biased toward basic and acidic residues. Ser610 carries the phosphoserine modification. Residues 624 to 650 (PSPPLPPPPPPPPPPPPPPPPPPPPLP) show a composition bias toward pro residues. Low complexity predominate over residues 651–662 (SQSAPSAGSAAP). 2 stretches are compositionally biased toward pro residues: residues 707–721 (GVVP…PPTP) and 760–781 (PPTP…PPKP). Over residues 791–802 (TKTVAPVVTQAA) the composition is skewed to low complexity. 2 stretches are compositionally biased toward pro residues: residues 803–814 (PPTPTPPVPPAK) and 823–840 (YIPP…PPTL). Ser827 is subject to Phosphoserine. Residue Thr830 is modified to Phosphothreonine. Ser845, Ser853, and Ser894 each carry phosphoserine. Pro residues predominate over residues 909-947 (IPVPSPDFPPPPPESSLVFPPPPPSPVPAPPPPPPPTAS). Residues 948 to 968 (PTPDKSGSPGKKTSKTSSPGG) show a composition bias toward low complexity. Ser965 is modified (phosphoserine). Thr974 is modified (phosphothreonine). Residues 976–986 (QRNSSIKSSSG) show a composition bias toward polar residues. Phosphoserine is present on residues Ser996 and Ser1012. Pro residues-rich tracts occupy residues 1018–1027 (LPPPAAPPKP) and 1065–1088 (PSPP…PPIE). Composition is skewed to polar residues over residues 1131–1144 (TRLT…QPTM) and 1151–1161 (VPTSPKSSLSV). A Phosphoserine modification is found at Ser1183. Tyr1226 is subject to Phosphotyrosine; by ABL1. Residues 1238 to 1250 (PKRDQNTKLSRDW) show a composition bias toward basic and acidic residues.

It belongs to the MRL family. Interacts with EVL and VASP and targets them to the leading edge. Interacts (via Ras associating and PH domains) with RAC1. Isoform RMO1-RAPH1 is ubiquitously expressed with highest levels in brain, heart, ovary and developing embryo. Isoform RMO1 is widely expressed with highest levels in liver. Low expression in B-cells.

Its subcellular location is the cell membrane. The protein localises to the cell projection. The protein resides in the lamellipodium. It localises to the filopodium. It is found in the cytoplasm. Its subcellular location is the cytoskeleton. Mediator of localized membrane signals. Implicated in the regulation of lamellipodial dynamics. Negatively regulates cell adhesion. This chain is Ras-associated and pleckstrin homology domains-containing protein 1 (RAPH1), found in Homo sapiens (Human).